The chain runs to 288 residues: MALFRKKDKYIRITPNNSLKGSVSHNVPEVPDELFAKCPACKHMIYKKDLGLAKICPTCSYNFRISAQERLTLTVDEGSFQELFTSIETKDPLRFPGYQEKLQKAKETTGLHEAVLTGKAMVKGQQIALAIMDSHFIMASMGTVVGEKITRLFELAIEENLPVVIFTASGGARMQEGIMSLMQMAKVSAAVKRHSNAGLFYLTILTDPTTGGVTASFAMGGDIILAEPQSLVGFAGRRVIETTVRENLPDDFQKAEFLQDHGFVDAIVKRTELRDKIAHLVAFHGGGQ.

In terms of domain architecture, CoA carboxyltransferase N-terminal spans 34–288; it reads LFAKCPACKH…HLVAFHGGGQ (255 aa). Zn(2+) is bound by residues C38, C41, C56, and C59. Residues 38-59 form a C4-type zinc finger; that stretch reads CPACKHMIYKKDLGLAKICPTC.

The protein belongs to the AccD/PCCB family. In terms of assembly, acetyl-CoA carboxylase is a heterohexamer composed of biotin carboxyl carrier protein (AccB), biotin carboxylase (AccC) and two subunits each of ACCase subunit alpha (AccA) and ACCase subunit beta (AccD). The cofactor is Zn(2+).

The protein resides in the cytoplasm. The enzyme catalyses N(6)-carboxybiotinyl-L-lysyl-[protein] + acetyl-CoA = N(6)-biotinyl-L-lysyl-[protein] + malonyl-CoA. It functions in the pathway lipid metabolism; malonyl-CoA biosynthesis; malonyl-CoA from acetyl-CoA: step 1/1. Its function is as follows. Component of the acetyl coenzyme A carboxylase (ACC) complex. Biotin carboxylase (BC) catalyzes the carboxylation of biotin on its carrier protein (BCCP) and then the CO(2) group is transferred by the transcarboxylase to acetyl-CoA to form malonyl-CoA. The polypeptide is Acetyl-coenzyme A carboxylase carboxyl transferase subunit beta (Streptococcus pyogenes serotype M28 (strain MGAS6180)).